The following is a 185-amino-acid chain: Ribosome-recycling factor (185 aa).

Belongs to the RRF family.

It localises to the cytoplasm. Functionally, responsible for the release of ribosomes from messenger RNA at the termination of protein biosynthesis. May increase the efficiency of translation by recycling ribosomes from one round of translation to another. This Francisella philomiragia subsp. philomiragia (strain ATCC 25017 / CCUG 19701 / FSC 153 / O#319-036) protein is Ribosome-recycling factor.